A 437-amino-acid chain; its full sequence is Protein translocase subunit SecY (437 aa).

10 helical membrane-spanning segments follow: residues 23–43, 77–97, 125–145, 154–174, 183–203, 217–237, 271–291, 315–335, 367–387, and 395–415; these read IVFLIVAIIVFRIGSFIPIPG, IFALGIMPYISASIIIQLLTL, LILALVQSIGIAMTLPNIAGI, FYFYLIAIISLVTSTMFLMWL, IGNGISIIIFIGIIAGLPSAI, ILLFLFILLLIFSVIFLVVFM, MAGVIPAIFASSIVLFPATII, YLILYISAIVFFCFFYTGLVF, IMLRLTLVGSLYITFICLIPE, and VPFYFGGTSLLIVVVVIIDFI.

Belongs to the SecY/SEC61-alpha family. Component of the Sec protein translocase complex. Heterotrimer consisting of SecY, SecE and SecG subunits. The heterotrimers can form oligomers, although 1 heterotrimer is thought to be able to translocate proteins. Interacts with the ribosome. Interacts with SecDF, and other proteins may be involved. Interacts with SecA.

It localises to the cell membrane. Functionally, the central subunit of the protein translocation channel SecYEG. Consists of two halves formed by TMs 1-5 and 6-10. These two domains form a lateral gate at the front which open onto the bilayer between TMs 2 and 7, and are clamped together by SecE at the back. The channel is closed by both a pore ring composed of hydrophobic SecY resides and a short helix (helix 2A) on the extracellular side of the membrane which forms a plug. The plug probably moves laterally to allow the channel to open. The ring and the pore may move independently. The protein is Protein translocase subunit SecY of Buchnera aphidicola subsp. Acyrthosiphon pisum (strain APS) (Acyrthosiphon pisum symbiotic bacterium).